Consider the following 432-residue polypeptide: Phosphoribosylamine--glycine ligase (432 aa).

The ATP-grasp domain maps to R110–N316. I137–T194 serves as a coordination point for ATP. Mg(2+) is bound by residues Q274, E286, and N288. Mn(2+)-binding residues include Q274, E286, and N288.

The protein belongs to the GARS family. Mg(2+) serves as cofactor. The cofactor is Mn(2+).

It catalyses the reaction 5-phospho-beta-D-ribosylamine + glycine + ATP = N(1)-(5-phospho-beta-D-ribosyl)glycinamide + ADP + phosphate + H(+). It functions in the pathway purine metabolism; IMP biosynthesis via de novo pathway; N(1)-(5-phospho-D-ribosyl)glycinamide from 5-phospho-alpha-D-ribose 1-diphosphate: step 2/2. The polypeptide is Phosphoribosylamine--glycine ligase (Methanococcoides burtonii (strain DSM 6242 / NBRC 107633 / OCM 468 / ACE-M)).